Reading from the N-terminus, the 370-residue chain is DnaJ homolog subfamily B member 12 (370 aa).

The residue at position 1 (M1) is an N-acetylmethionine. The segment at 51–92 (NQKPQPAGDQPQPTEATHTTHRKAAGANTASANGEAGGESTK) is disordered. A J domain is found at 110-174 (DYYEILGVSR…EKRKQYDQFG (65 aa)). H185 carries the post-translational modification Pros-methylhistidine. A helical membrane pass occupies residues 242-262 (GGLGVFVQLMPILILILVSAL).

It belongs to the DnaJ family. DNAJB12/DNAJB14 subfamily. In terms of assembly, homodimer and homotetramer. Interacts (via J domain) with HSPA8/Hsc70. Forms a multiprotein complex, at least composed of DNAJB12, DNAJB14, HSPA8/Hsc70 and SGTA; interaction with DNAJB14 and HSPA8/Hsc70 is direct. Methylated at His-185 by METTL9.

The protein localises to the endoplasmic reticulum membrane. It is found in the nucleus membrane. Functionally, acts as a co-chaperone with HSPA8/Hsc70; required to promote protein folding and trafficking, prevent aggregation of client proteins, and promote unfolded proteins to endoplasmic reticulum-associated degradation (ERAD) pathway. Acts by determining HSPA8/Hsc70's ATPase and polypeptide-binding activities. Can also act independently of HSPA8/Hsc70: together with DNAJB14, acts as a chaperone that promotes maturation of potassium channels KCND2 and KCNH2 by stabilizing nascent channel subunits and assembling them into tetramers. While stabilization of nascent channel proteins is dependent on HSPA8/Hsc70, the process of oligomerization of channel subunits is independent of HSPA8/Hsc70. When overexpressed, forms membranous structures together with DNAJB14 and HSPA8/Hsc70 within the nucleus; the role of these structures, named DJANGOs, is still unclear. This Bos taurus (Bovine) protein is DnaJ homolog subfamily B member 12 (DNAJB12).